A 398-amino-acid chain; its full sequence is Phosphoglycerate kinase (398 aa).

Residues Asp-21–Asn-23, Arg-41, His-64–Arg-67, Arg-123, and Arg-156 contribute to the substrate site. ATP contacts are provided by residues Lys-207, Gly-294, Glu-325, and Gly-354–Ser-357.

It belongs to the phosphoglycerate kinase family. As to quaternary structure, monomer.

The protein resides in the cytoplasm. It catalyses the reaction (2R)-3-phosphoglycerate + ATP = (2R)-3-phospho-glyceroyl phosphate + ADP. The protein operates within carbohydrate degradation; glycolysis; pyruvate from D-glyceraldehyde 3-phosphate: step 2/5. The polypeptide is Phosphoglycerate kinase (Salinibacter ruber (strain DSM 13855 / M31)).